The chain runs to 1192 residues: Probable ATP-binding protein BrxC (1192 aa).

It belongs to the BrxC family.

Its function is as follows. BREX systems (bacteriophage exclusion) provide immunity against bacteriophage. A core protein of a type 1 BREX system. This system allows phage adsorption but prevents phage DNA replication, without degradation of the phage DNA. Methylation of bacterial DNA by PglX probably guides self/non-self discrimination. When the brxA-brxB-brxC-pglX and pglZ-brxL operons are transformed into a susceptible B.subtilis strain (BEST7003) they confer resistance to bacteriophages SPbeta, SP16, Zeta, phi3T and SP02 and partial protection to phages SP01 and SP82G (these include lytic and temperate phage). They do not protect against phages phi105, rho10 or rho14. Additionally confers a very slight reduction in efficiency of plasmid transformation. The sequence is that of Probable ATP-binding protein BrxC from Bacillus cereus (strain H3081.97).